The sequence spans 580 residues: Protein O-linked-mannose beta-1,4-N-acetylglucosaminyltransferase 2 (580 aa).

Residues 1–4 (MHLS) are Cytoplasmic-facing. Residues 5 to 25 (AVLNALLVSVLAAVLWKHVRL) form a helical; Signal-anchor for type II membrane protein membrane-spanning segment. At 26-580 (REHAASLEEE…PFADVLVCST (555 aa)) the chain is on the lumenal side. N-linked (GlcNAc...) asparagine glycosylation is found at Asn99 and Asn276. A Fibronectin type-III domain is found at 488–580 (ARCQASVQGA…PFADVLVCST (93 aa)).

Belongs to the glycosyltransferase 61 family.

It localises to the endoplasmic reticulum membrane. It catalyses the reaction 3-O-(alpha-D-mannosyl)-L-threonyl-[protein] + UDP-N-acetyl-alpha-D-glucosamine = 3-O-(N-acetyl-beta-D-glucosaminyl-(1-&gt;4)-alpha-D-mannosyl)-L-threonyl-[protein] + UDP + H(+). It participates in protein modification; protein glycosylation. In terms of biological role, O-linked mannose beta-1,4-N-acetylglucosaminyltransferase that transfers UDP-N-acetyl-D-glucosamine to the 4-position of the mannose to generate N-acetyl-D-glucosamine-beta-1,4-O-D-mannosylprotein. Involved in the biosynthesis of the phosphorylated O-mannosyl trisaccharide (N-acetylgalactosamine-beta-3-N-acetylglucosamine-beta-4-(phosphate-6-)mannose), a carbohydrate structure present in alpha-dystroglycan (DAG1), which is required for binding laminin G-like domain-containing extracellular proteins with high affinity. In Bos taurus (Bovine), this protein is Protein O-linked-mannose beta-1,4-N-acetylglucosaminyltransferase 2 (POMGNT2).